We begin with the raw amino-acid sequence, 177 residues long: Large ribosomal subunit protein uL16 (177 aa).

The protein belongs to the universal ribosomal protein uL16 family.

This Natronomonas pharaonis (strain ATCC 35678 / DSM 2160 / CIP 103997 / JCM 8858 / NBRC 14720 / NCIMB 2260 / Gabara) (Halobacterium pharaonis) protein is Large ribosomal subunit protein uL16.